We begin with the raw amino-acid sequence, 185 residues long: Large ribosomal subunit protein uL5 (185 aa).

Belongs to the universal ribosomal protein uL5 family. In terms of assembly, part of the 50S ribosomal subunit; part of the 5S rRNA/L5/L18/L25 subcomplex. Contacts the 5S rRNA and the P site tRNA. Forms a bridge to the 30S subunit in the 70S ribosome.

Its function is as follows. This is one of the proteins that bind and probably mediate the attachment of the 5S RNA into the large ribosomal subunit, where it forms part of the central protuberance. In the 70S ribosome it contacts protein S13 of the 30S subunit (bridge B1b), connecting the 2 subunits; this bridge is implicated in subunit movement. Contacts the P site tRNA; the 5S rRNA and some of its associated proteins might help stabilize positioning of ribosome-bound tRNAs. The sequence is that of Large ribosomal subunit protein uL5 from Azorhizobium caulinodans (strain ATCC 43989 / DSM 5975 / JCM 20966 / LMG 6465 / NBRC 14845 / NCIMB 13405 / ORS 571).